The following is a 185-amino-acid chain: Elongation factor P 1 (185 aa).

Belongs to the elongation factor P family.

The protein resides in the cytoplasm. Its pathway is protein biosynthesis; polypeptide chain elongation. Functionally, involved in peptide bond synthesis. Stimulates efficient translation and peptide-bond synthesis on native or reconstituted 70S ribosomes in vitro. Probably functions indirectly by altering the affinity of the ribosome for aminoacyl-tRNA, thus increasing their reactivity as acceptors for peptidyl transferase. The protein is Elongation factor P 1 (efp1) of Chlamydia caviae (strain ATCC VR-813 / DSM 19441 / 03DC25 / GPIC) (Chlamydophila caviae).